The following is a 1147-amino-acid chain: Cellulose synthase-like protein D3 (1147 aa).

Disordered stretches follow at residues 1 to 33 and 259 to 281; these read MSTGPGKKAIRNAGGVGGGAGPSAGGPRGPAGQ and KLGGDGGGGGGGGPLPEQKPFKP. Gly residues-rich tracts occupy residues 14–29 and 262–272; these read GGVGGGAGPSAGGPRG and GDGGGGGGGGP. The next 2 helical transmembrane spans lie at 292 to 312 and 322 to 342; these read VISPYRIFIVIRMFVLLFYLT and ALWLWGMSIVCELWFAFSWLL. Active-site residues include Asp-422 and Asp-847. A run of 6 helical transmembrane segments spans residues 929 to 949, 954 to 974, 1001 to 1021, 1045 to 1065, 1075 to 1095, and 1108 to 1128; these read IFLLVYCFIPALSLFSGFFIV, IAFLCYLLTMTITLVALGILE, LYAVVQGLLKVMAGIEISFTL, LLIPPITIGMVNIIAIAFAFA, WGKFIGGGFFSFWVLAHLNPF, and TIVFVWSGLLSITVSLLWVAI.

This sequence belongs to the glycosyltransferase 2 family. Plant cellulose synthase-like D subfamily.

The protein resides in the golgi apparatus membrane. In terms of biological role, thought to be a Golgi-localized beta-glycan synthase that polymerize the backbones of noncellulosic polysaccharides (hemicelluloses) of plant cell wall. The sequence is that of Cellulose synthase-like protein D3 (CSLD3) from Oryza sativa subsp. japonica (Rice).